The chain runs to 254 residues: Ribosomal RNA small subunit methyltransferase J (254 aa).

S-adenosyl-L-methionine-binding positions include 106 to 107 and D177; that span reads RD.

The protein belongs to the methyltransferase superfamily. RsmJ family.

The protein resides in the cytoplasm. It carries out the reaction guanosine(1516) in 16S rRNA + S-adenosyl-L-methionine = N(2)-methylguanosine(1516) in 16S rRNA + S-adenosyl-L-homocysteine + H(+). In terms of biological role, specifically methylates the guanosine in position 1516 of 16S rRNA. The sequence is that of Ribosomal RNA small subunit methyltransferase J from Nitrosococcus oceani (strain ATCC 19707 / BCRC 17464 / JCM 30415 / NCIMB 11848 / C-107).